Consider the following 300-residue polypeptide: Bis(5'-nucleosyl)-tetraphosphatase, symmetrical (300 aa).

Belongs to the Ap4A hydrolase family.

The enzyme catalyses P(1),P(4)-bis(5'-adenosyl) tetraphosphate + H2O = 2 ADP + 2 H(+). Functionally, hydrolyzes diadenosine 5',5'''-P1,P4-tetraphosphate to yield ADP. The sequence is that of Bis(5'-nucleosyl)-tetraphosphatase, symmetrical from Pseudomonas syringae pv. tomato (strain ATCC BAA-871 / DC3000).